A 146-amino-acid chain; its full sequence is NADH-quinone oxidoreductase subunit A (146 aa).

Helical transmembrane passes span 8-28 (FGSV…GYLT), 63-83 (FYVV…LYPW), and 93-113 (FALI…AYAW).

Belongs to the complex I subunit 3 family. In terms of assembly, NDH-1 is composed of 14 different subunits. Subunits NuoA, H, J, K, L, M, N constitute the membrane sector of the complex.

The protein resides in the cell inner membrane. The catalysed reaction is a quinone + NADH + 5 H(+)(in) = a quinol + NAD(+) + 4 H(+)(out). NDH-1 shuttles electrons from NADH, via FMN and iron-sulfur (Fe-S) centers, to quinones in the respiratory chain. The immediate electron acceptor for the enzyme in this species is believed to be a menaquinone. Couples the redox reaction to proton translocation (for every two electrons transferred, four hydrogen ions are translocated across the cytoplasmic membrane), and thus conserves the redox energy in a proton gradient. The chain is NADH-quinone oxidoreductase subunit A from Chlorobium chlorochromatii (strain CaD3).